A 368-amino-acid polypeptide reads, in one-letter code: Cytochrome b-c1 complex subunit 2, mitochondrial (368 aa).

The transit peptide at 1–16 (MLSAARLQFAQGSVRR) directs the protein to the mitochondrion. 2 positions are modified to phosphoserine: S141 and S168.

The protein belongs to the peptidase M16 family. UQCRC2/QCR2 subfamily. Component of the ubiquinol-cytochrome c oxidoreductase (cytochrome b-c1 complex, complex III, CIII), a multisubunit enzyme composed of 10 subunits. The complex is composed of 3 respiratory subunits cytochrome b (COB), cytochrome c1 (CYT1) and Rieske protein (RIP1), 2 core protein subunits COR1 and QCR2, and 5 low-molecular weight protein subunits QCR6, QCR7, QCR8, QCR9 and QCR10. The complex exists as an obligatory dimer and forms supercomplexes (SCs) in the inner mitochondrial membrane with a monomer or a dimer of cytochrome c oxidase (complex IV, CIV), resulting in 2 different assemblies (supercomplexes III(2)IV and III(2)IV(2)).

It is found in the mitochondrion inner membrane. Functionally, component of the ubiquinol-cytochrome c oxidoreductase, a multisubunit transmembrane complex that is part of the mitochondrial electron transport chain which drives oxidative phosphorylation. The respiratory chain contains 3 multisubunit complexes succinate dehydrogenase (complex II, CII), ubiquinol-cytochrome c oxidoreductase (cytochrome b-c1 complex, complex III, CIII) and cytochrome c oxidase (complex IV, CIV), that cooperate to transfer electrons derived from NADH and succinate to molecular oxygen, creating an electrochemical gradient over the inner membrane that drives transmembrane transport and the ATP synthase. The cytochrome b-c1 complex catalyzes electron transfer from ubiquinol to cytochrome c, linking this redox reaction to translocation of protons across the mitochondrial inner membrane, with protons being carried across the membrane as hydrogens on the quinol. In the process called Q cycle, 2 protons are consumed from the matrix, 4 protons are released into the intermembrane space and 2 electrons are passed to cytochrome c. The chain is Cytochrome b-c1 complex subunit 2, mitochondrial (QCR2) from Saccharomyces cerevisiae (strain ATCC 204508 / S288c) (Baker's yeast).